Consider the following 502-residue polypeptide: Glycerol kinase (502 aa).

Residue T14 participates in ADP binding. ATP contacts are provided by T14, T15, and S16. T14 is a binding site for sn-glycerol 3-phosphate. R18 contributes to the ADP binding site. Sn-glycerol 3-phosphate contacts are provided by R84, E85, Y136, and D246. Positions 84, 85, 136, 246, and 247 each coordinate glycerol. The ADP site is built by T268 and G311. 4 residues coordinate ATP: T268, G311, Q315, and G412. Residues G412 and N416 each contribute to the ADP site.

It belongs to the FGGY kinase family. As to quaternary structure, homotetramer and homodimer (in equilibrium). Heterodimer with EIIA-Glc. Binds 1 zinc ion per glycerol kinase EIIA-Glc dimer. The zinc ion is important for dimerization.

It catalyses the reaction glycerol + ATP = sn-glycerol 3-phosphate + ADP + H(+). It functions in the pathway polyol metabolism; glycerol degradation via glycerol kinase pathway; sn-glycerol 3-phosphate from glycerol: step 1/1. Its activity is regulated as follows. Activity of this regulatory enzyme is affected by several metabolites. Allosterically and non-competitively inhibited by fructose 1,6-bisphosphate (FBP) and unphosphorylated phosphocarrier protein EIIA-Glc (III-Glc), an integral component of the bacterial phosphotransferase (PTS) system. In terms of biological role, key enzyme in the regulation of glycerol uptake and metabolism. Catalyzes the phosphorylation of glycerol to yield sn-glycerol 3-phosphate. The chain is Glycerol kinase from Citrobacter koseri (strain ATCC BAA-895 / CDC 4225-83 / SGSC4696).